The chain runs to 179 residues: Peptidyl-prolyl cis-trans isomerase A (179 aa).

Positions 15-178 (FFDITIGGVE…KPVVIANCGQ (164 aa)) constitute a PPIase cyclophilin-type domain.

It belongs to the cyclophilin-type PPIase family.

It is found in the cytoplasm. The protein resides in the cytosol. The catalysed reaction is [protein]-peptidylproline (omega=180) = [protein]-peptidylproline (omega=0). With respect to regulation, binds cyclosporin A (CsA). CsA mediates some of its effects via an inhibitory action on PPIase. Functionally, PPIase that catalyzes the cis-trans isomerization of proline imidic peptide bonds in oligopeptides and may therefore assist protein folding. This is Peptidyl-prolyl cis-trans isomerase A (ppiA) from Dictyostelium discoideum (Social amoeba).